Consider the following 527-residue polypeptide: Peptide chain release factor 3 (527 aa).

The tr-type G domain occupies 9 to 277 (AKRRTFAIIS…AVVDWAPRPL (269 aa)). GTP-binding positions include 18–25 (SHPDAGKT), 86–90 (DTPGH), and 140–143 (NKLD).

Belongs to the TRAFAC class translation factor GTPase superfamily. Classic translation factor GTPase family. PrfC subfamily.

The protein localises to the cytoplasm. Its function is as follows. Increases the formation of ribosomal termination complexes and stimulates activities of RF-1 and RF-2. It binds guanine nucleotides and has strong preference for UGA stop codons. It may interact directly with the ribosome. The stimulation of RF-1 and RF-2 is significantly reduced by GTP and GDP, but not by GMP. The protein is Peptide chain release factor 3 of Ectopseudomonas mendocina (strain ymp) (Pseudomonas mendocina).